Here is a 258-residue protein sequence, read N- to C-terminus: Imidazole glycerol phosphate synthase subunit HisF (258 aa).

Catalysis depends on residues D11 and D130.

The protein belongs to the HisA/HisF family. Heterodimer of HisH and HisF.

It localises to the cytoplasm. It carries out the reaction 5-[(5-phospho-1-deoxy-D-ribulos-1-ylimino)methylamino]-1-(5-phospho-beta-D-ribosyl)imidazole-4-carboxamide + L-glutamine = D-erythro-1-(imidazol-4-yl)glycerol 3-phosphate + 5-amino-1-(5-phospho-beta-D-ribosyl)imidazole-4-carboxamide + L-glutamate + H(+). Its pathway is amino-acid biosynthesis; L-histidine biosynthesis; L-histidine from 5-phospho-alpha-D-ribose 1-diphosphate: step 5/9. In terms of biological role, IGPS catalyzes the conversion of PRFAR and glutamine to IGP, AICAR and glutamate. The HisF subunit catalyzes the cyclization activity that produces IGP and AICAR from PRFAR using the ammonia provided by the HisH subunit. In Roseiflexus sp. (strain RS-1), this protein is Imidazole glycerol phosphate synthase subunit HisF.